A 592-amino-acid chain; its full sequence is Aspartate--tRNA(Asp/Asn) ligase (592 aa).

Glutamate 173 contacts L-aspartate. The segment at 197–200 is aspartate; sequence QLFK. Arginine 219 contacts L-aspartate. ATP is bound by residues 219-221 and glutamine 228; that span reads RDE. Histidine 448 contacts L-aspartate. Glutamate 481 contributes to the ATP binding site. An L-aspartate-binding site is contributed by arginine 488. 533–536 contributes to the ATP binding site; it reads GLDR.

The protein belongs to the class-II aminoacyl-tRNA synthetase family. Type 1 subfamily. Homodimer.

It is found in the cytoplasm. It catalyses the reaction tRNA(Asx) + L-aspartate + ATP = L-aspartyl-tRNA(Asx) + AMP + diphosphate. Functionally, aspartyl-tRNA synthetase with relaxed tRNA specificity since it is able to aspartylate not only its cognate tRNA(Asp) but also tRNA(Asn). Reaction proceeds in two steps: L-aspartate is first activated by ATP to form Asp-AMP and then transferred to the acceptor end of tRNA(Asp/Asn). This Chromohalobacter salexigens (strain ATCC BAA-138 / DSM 3043 / CIP 106854 / NCIMB 13768 / 1H11) protein is Aspartate--tRNA(Asp/Asn) ligase.